The primary structure comprises 97 residues: Ribosomal biogenesis factor (97 aa).

Position 19 is a phosphoserine (Ser19). Lys21 is subject to N6-acetyllysine. Ser69 is subject to Phosphoserine.

In terms of assembly, associates with the pre-60S ribosomal particles.

The protein resides in the nucleus. The protein localises to the nucleolus. Functionally, trans-acting factor in ribosome biogenesis required for efficient 40S and 60S subunit production. The protein is Ribosomal biogenesis factor (Rbis) of Mus musculus (Mouse).